The following is a 159-amino-acid chain: Putative pre-16S rRNA nuclease (159 aa).

This sequence belongs to the YqgF nuclease family.

It is found in the cytoplasm. In terms of biological role, could be a nuclease involved in processing of the 5'-end of pre-16S rRNA. The sequence is that of Putative pre-16S rRNA nuclease from Agrobacterium fabrum (strain C58 / ATCC 33970) (Agrobacterium tumefaciens (strain C58)).